Here is an 815-residue protein sequence, read N- to C-terminus: Cilia- and flagella-associated protein 251 (815 aa).

10 WD repeats span residues 58–99 (GHTS…PTRT), 103–148 (PHRH…TPPE), 166–205 (PAGD…PRFQ), 218–257 (QSVG…AQVG), 271–308 (IHNC…VAWF), 379–418 (SLLA…LLGG), 420–460 (AFER…DLYV), 463–502 (NTAA…HTMR), 511–553 (SHHG…VAAG), and 573–612 (SFAP…LERS).

As to quaternary structure, identified in a spoke-associated complex containing CFAP61, CFAP91 and CFAP251; the complex is associated with the radial spokes in the axoneme. The complex associates with Calmodulin; the association is calcium sensitive.

Its subcellular location is the cytoplasm. It localises to the cytoskeleton. It is found in the flagellum axoneme. As component of a spoke-associated complex, regulates flagellar dynein activity by mediating regulatory signals between the radial spokes and dynein arms. The sequence is that of Cilia- and flagella-associated protein 251 from Chlamydomonas reinhardtii (Chlamydomonas smithii).